The following is an 864-amino-acid chain: DNA mismatch repair protein MutS (864 aa).

ATP is bound at residue 607–614 (GPNMGGKS).

It belongs to the DNA mismatch repair MutS family.

Its function is as follows. This protein is involved in the repair of mismatches in DNA. It is possible that it carries out the mismatch recognition step. This protein has a weak ATPase activity. The chain is DNA mismatch repair protein MutS from Neisseria gonorrhoeae (strain NCCP11945).